Consider the following 451-residue polypeptide: Tryptophan--tRNA ligase (451 aa).

Residues 10-12 (TTT) and 18-19 (GN) each bind ATP. Residues 11–19 (TTGTPHLGN) carry the 'HIGH' region motif. An L-tryptophan-binding site is contributed by Asp-143. Residues 155–157 (GRD), Leu-195, and 202–206 (KMSKS) each bind ATP. A 'KMSKS' region motif is present at residues 202 to 206 (KMSKS).

It belongs to the class-I aminoacyl-tRNA synthetase family. As to quaternary structure, homodimer.

The protein resides in the cytoplasm. It catalyses the reaction tRNA(Trp) + L-tryptophan + ATP = L-tryptophyl-tRNA(Trp) + AMP + diphosphate + H(+). Its function is as follows. Catalyzes the attachment of tryptophan to tRNA(Trp). This is Tryptophan--tRNA ligase from Bordetella bronchiseptica (strain ATCC BAA-588 / NCTC 13252 / RB50) (Alcaligenes bronchisepticus).